A 599-amino-acid polypeptide reads, in one-letter code: Elongation factor 4 (599 aa).

One can recognise a tr-type G domain in the interval 2–184; the sequence is KNIRNFSIIA…RLVRDIPPPE (183 aa). GTP contacts are provided by residues 14-19 and 131-134; these read DHGKST and NKID.

The protein belongs to the TRAFAC class translation factor GTPase superfamily. Classic translation factor GTPase family. LepA subfamily.

The protein localises to the cell inner membrane. It carries out the reaction GTP + H2O = GDP + phosphate + H(+). Its function is as follows. Required for accurate and efficient protein synthesis under certain stress conditions. May act as a fidelity factor of the translation reaction, by catalyzing a one-codon backward translocation of tRNAs on improperly translocated ribosomes. Back-translocation proceeds from a post-translocation (POST) complex to a pre-translocation (PRE) complex, thus giving elongation factor G a second chance to translocate the tRNAs correctly. Binds to ribosomes in a GTP-dependent manner. This chain is Elongation factor 4, found in Shigella sonnei (strain Ss046).